Consider the following 247-residue polypeptide: Caffeoyl-CoA O-methyltransferase (247 aa).

A substrate-binding site is contributed by lysine 21. S-adenosyl-L-methionine contacts are provided by residues threonine 63, glutamate 85, 87–88 (GV), serine 93, aspartate 111, and alanine 140. Aspartate 163 provides a ligand contact to substrate. Aspartate 163 serves as a coordination point for a divalent metal cation. Aspartate 165 contributes to the S-adenosyl-L-methionine binding site. Residues aspartate 189 and asparagine 190 each contribute to the a divalent metal cation site. Asparagine 194 provides a ligand contact to substrate.

This sequence belongs to the class I-like SAM-binding methyltransferase superfamily. Cation-dependent O-methyltransferase family. CCoAMT subfamily. Homodimer. Requires Ca(2+) as cofactor. Mg(2+) is required as a cofactor. The cofactor is Zn(2+).

The catalysed reaction is (E)-caffeoyl-CoA + S-adenosyl-L-methionine = (E)-feruloyl-CoA + S-adenosyl-L-homocysteine + H(+). It participates in aromatic compound metabolism; phenylpropanoid biosynthesis. Its function is as follows. Methylates caffeoyl-CoA to feruloyl-CoA and 5-hydroxyferuloyl-CoA to sinapoyl-CoA. Plays a role in the synthesis of feruloylated polysaccharides. Involved in the reinforcement of the plant cell wall. Also involved in the responding to wounding or pathogen challenge by the increased formation of cell wall-bound ferulic acid polymers. The sequence is that of Caffeoyl-CoA O-methyltransferase (CCOMT) from Medicago sativa (Alfalfa).